The chain runs to 153 residues: Adenosine 5'-monophosphoramidase HINT3 (153 aa).

In terms of domain architecture, HIT spans 20–130 (IFCRIANKQE…PASQLGFLSR (111 aa)). AMP is bound by residues 46-47 (DI) and 115-117 (HLH). Residues 113-117 (HLHLH) carry the Histidine triad motif motif. His-115 serves as the catalytic Tele-AMP-histidine intermediate.

This sequence belongs to the HINT family. In terms of assembly, forms dimers to octamers and even larger oligomer.

The protein localises to the cytoplasm. It localises to the nucleus. It carries out the reaction adenosine 5'-phosphoramidate + H2O = AMP + NH4(+). In terms of biological role, exhibits adenosine 5'-monophosphoramidase activity, hydrolyzing purine nucleotide phosphoramidates with a single phosphate group such as adenosine 5'monophosphoramidate (AMP-NH2) to yield AMP and NH2. Hydrolyzes lysyl-AMP (AMP-N-epsilon-(N-alpha-acetyl lysine methyl ester)) generated by lysine tRNA ligase. The polypeptide is Adenosine 5'-monophosphoramidase HINT3 (hint3) (Xenopus tropicalis (Western clawed frog)).